A 633-amino-acid chain; its full sequence is Keratin, type II cytoskeletal 2 epidermal (633 aa).

The interval 1–189 (MSCQISCKSR…DPEIQNVKSQ (189 aa)) is head. The residue at position 18 (Arg-18) is an Asymmetric dimethylarginine. Phosphoserine is present on residues Ser-21, Ser-24, and Ser-60. The interval 190–225 (EREQIKTLNNKFASFIDKVRFLEQQNQVLQTKWELL) is coil 1A. One can recognise an IF rod domain in the interval 190 to 503 (EREQIKTLNN…KLLEGEECRM (314 aa)). Positions 226 to 244 (QQLDVSTRTTNLEPIFQAY) are linker 1. The tract at residues 245 to 336 (IAKLKKYVDT…FLFDXELSQM (92 aa)) is coil 1B. The interval 337 to 360 (QTQISETNVTLSMDNNRSLDLDSI) is linker 12. Positions 361-499 (ISEVKAQYEE…ATYRKLLEGE (139 aa)) are coil 2. A tail region spans residues 500-633 (ECRMSGDLSS…SGSSVTFSFR (134 aa)). Low complexity predominate over residues 518–527 (SSMSSSMTSR). The disordered stretch occupies residues 518–633 (SSMSSSMTSR…SGSSVTFSFR (116 aa)). Residues 528–613 (GGFGGYGSGG…GYGSGGGSRG (86 aa)) are compositionally biased toward gly residues. Residues Arg-588 and Arg-612 each carry the omega-N-methylarginine modification.

The protein belongs to the intermediate filament family. In terms of assembly, heterotetramer of two type I and two type II keratins. Associates with KRT10.

Its subcellular location is the cytoplasm. In terms of biological role, probably contributes to terminal cornification. Associated with keratinocyte activation, proliferation and keratinization. Required for maintenance of corneocytes and keratin filaments in suprabasal keratinocytes in the epidermis of the ear, potentially via moderation of expression and localization of keratins and their partner proteins. Plays a role in the establishment of the epidermal barrier on plantar skin. The chain is Keratin, type II cytoskeletal 2 epidermal (KRT2) from Canis lupus familiaris (Dog).